The sequence spans 467 residues: Coiled-coil domain-containing protein 71 (467 aa).

The segment at 81–105 (PSQTKLQARAPNPTATSPPASAPRT) is disordered. A compositionally biased stretch (low complexity) spans 88–105 (ARAPNPTATSPPASAPRT). Ser-129 carries the phosphoserine modification. 2 disordered regions span residues 211–280 (KLRK…GTKT) and 349–416 (VRAK…KAWL). Polar residues predominate over residues 253 to 265 (GHQSKTNRATGSP). Positions 279–359 (KTAQAKVART…RAKAKVARTQ (81 aa)) form a coiled coil. The span at 349 to 380 (VRAKAKVARTQPRGRGRPKGSAKARTTRKGQK) shows a compositional bias: basic residues. Basic and acidic residues predominate over residues 392 to 401 (RAEEAKDLPP).

The chain is Coiled-coil domain-containing protein 71 (CCDC71) from Homo sapiens (Human).